Here is a 262-residue protein sequence, read N- to C-terminus: Phosphatidylglycerol--prolipoprotein diacylglyceryl transferase (262 aa).

4 helical membrane passes run 9–29 (LGPLAIRWYALCIVTGLILAV), 41–61 (IIPDDILDFILVAFPLAILGA), 80–100 (IFAIWNGGLAIYGGLITGALV), and 109–129 (LINTWDFLDIAAPSVMIAQSL). R131 provides a ligand contact to a 1,2-diacyl-sn-glycero-3-phospho-(1'-sn-glycerol). 3 helical membrane passes run 167 to 187 (QPTFLYESLWNLLGFALILIF), 197 to 217 (GHITAFYLIWYGFGRMVIEGM), and 226 to 246 (GLRVSQWLSVVLIGLGIMIVI).

Belongs to the Lgt family.

It localises to the cell membrane. It carries out the reaction L-cysteinyl-[prolipoprotein] + a 1,2-diacyl-sn-glycero-3-phospho-(1'-sn-glycerol) = an S-1,2-diacyl-sn-glyceryl-L-cysteinyl-[prolipoprotein] + sn-glycerol 1-phosphate + H(+). It functions in the pathway protein modification; lipoprotein biosynthesis (diacylglyceryl transfer). Functionally, catalyzes the transfer of the diacylglyceryl group from phosphatidylglycerol to the sulfhydryl group of the N-terminal cysteine of a prolipoprotein, the first step in the formation of mature lipoproteins. In Streptococcus pneumoniae (strain P1031), this protein is Phosphatidylglycerol--prolipoprotein diacylglyceryl transferase.